Consider the following 822-residue polypeptide: Telomere length regulation protein TEL2 homolog (822 aa).

The interval 442–504 (NDDEEEQPDA…ADQEKKKSAP (63 aa)) is disordered. A compositionally biased stretch (polar residues) spans 465 to 477 (VSSQSVASDPGNG). A compositionally biased stretch (acidic residues) spans 480 to 489 (SELDSDDDLT).

Belongs to the TEL2 family.

It localises to the cytoplasm. The protein resides in the membrane. The protein localises to the nucleus. Regulator of the DNA damage response (DDR). Part of the TTT complex that is required to stabilize protein levels of the phosphatidylinositol 3-kinase-related protein kinase (PIKK) family proteins. Promotes assembly, stabilizes and maintains the activity of TORC complexes, which regulate cell growth and survival in response to nutrient and hormonal signals. May be involved in telomere length regulation. This chain is Telomere length regulation protein TEL2 homolog (telo2), found in Danio rerio (Zebrafish).